The following is an 80-amino-acid chain: Conotoxin Bu3 (80 aa).

Residues 1–22 form the signal peptide; sequence MKLMCVLIVSVLVLTACQLSTA. The propeptide occupies 23 to 51; sequence DDTRDKQKDRLVRLFRKKRDSSDSGLLPR. Disulfide bonds link Cys-53–Cys-69, Cys-60–Cys-72, and Cys-68–Cys-79.

Belongs to the conotoxin O1 superfamily. As to expression, expressed by the venom duct.

The protein localises to the secreted. The sequence is that of Conotoxin Bu3 from Conus bullatus (Bubble cone).